The sequence spans 321 residues: NADH-quinone oxidoreductase subunit H (321 aa).

The next 8 helical transmembrane spans lie at 9-29, 78-98, 111-131, 156-176, 183-203, 234-254, 262-282, and 296-316; these read LLAI…GAYM, IIFT…FAIM, IGIL…LLGG, FLGL…ISTI, IWNI…GLAI, FFIG…TLFF, LPPY…FILI, and ILGW…TAIV.

The protein belongs to the complex I subunit 1 family. NDH-1 is composed of 14 different subunits. Subunits NuoA, H, J, K, L, M, N constitute the membrane sector of the complex.

The protein resides in the cell membrane. The enzyme catalyses a quinone + NADH + 5 H(+)(in) = a quinol + NAD(+) + 4 H(+)(out). Functionally, NDH-1 shuttles electrons from NADH, via FMN and iron-sulfur (Fe-S) centers, to quinones in the respiratory chain. The immediate electron acceptor for the enzyme in this species is believed to be ubiquinone. Couples the redox reaction to proton translocation (for every two electrons transferred, four hydrogen ions are translocated across the cytoplasmic membrane), and thus conserves the redox energy in a proton gradient. This subunit may bind ubiquinone. In Baumannia cicadellinicola subsp. Homalodisca coagulata, this protein is NADH-quinone oxidoreductase subunit H.